Reading from the N-terminus, the 1113-residue chain is Protein MGA2 (1113 aa).

The interval 91–114 is disordered; it reads TPLEEEMESNRALKEEEEDEHENK. Position 255 is a phosphoserine (serine 255). Composition is skewed to polar residues over residues 344–357 and 437–452; these read DTTKFNNTTTSSRR and HIPSPTSMSEEGSESF. 2 disordered regions span residues 344-376 and 437-462; these read DTTKFNNTTTSSRRQLTEEESTTEYYSTDNNQL and HIPSPTSMSEEGSESFNYHHRDNDNP. A Phosphoserine modification is found at serine 467. Positions 530–610 constitute an IPT/TIG domain; it reads PSINRVIPSQ…NENNNDDLPQ (81 aa). Positions 658-687 are disordered; the sequence is IVGNDSPDSGTNGNSCSKSTGPSPNQHSMN. A compositionally biased stretch (polar residues) spans 663–687; the sequence is SPDSGTNGNSCSKSTGPSPNQHSMN. ANK repeat units lie at residues 719–748 and 752–781; these read LGRTLLHLACLKNYSSLVYTLIKKGARVND and FGLTPLHFACISGDPKIIKMLLNCKVNYSL. The helical transmembrane segment at 1037–1054 threads the bilayer; that stretch reads MLIFFWIPLTLLLLTWFI.

It localises to the membrane. The chain is Protein MGA2 (MGA2) from Saccharomyces cerevisiae (strain ATCC 204508 / S288c) (Baker's yeast).